Reading from the N-terminus, the 63-residue chain is uncharacterized protein (63 aa).

This is an uncharacterized protein from Haemophilus influenzae (strain ATCC 51907 / DSM 11121 / KW20 / Rd).